The sequence spans 219 residues: uncharacterized protein (219 aa).

This is an uncharacterized protein from Escherichia coli (Bacteriophage T4).